Consider the following 683-residue polypeptide: MRGCLQLARWLSAAPKGTAASLTRAPFVLANAPRYFTSSASRAGSRSTATKPLSDLEKRISAIPIERYRNFCIVAHVDHGKSTLSDRLLELTGTIEPGSNKQVLDKLDVERERGITVKAQTCSMIYNHNGEDYLLHLVDTPGHVDFRAEVSRSYASCGGALLLVDASQGIQAQTVANFYLAFAQGLELIPVINKVDLPSAEPERALEQMKNSFELDTENAVMVSAKTGLNVEKLLPTVIEKIPAYGHFPVDSHELLPLLTLSSPIGDCKKPLRMLLVDSWYDSYKGVICLVRIFDGEIRAGQQVVSFATGLKYYVGEVGIMYPNETPQSVLRAGQVGYIYFNPGMKRSKEAKIGDTFTRVGFEKAVEPLPGFEEPKAMVFVAAYPVDADHFEHLEDSINQLVLNDRSITVQKESSEALGAGFRLGFLGTLHCSVFEDRLRQEHGASIIITPPSVPVKIIWKDGKEEIITSPAKFPEDEELRSKVAEIQEPYVLATLTFPEEYLGKVIELCEANRGEQKSLEYFTPTQVILKYELPLAQLVDDFFGKLKGSTKGYASLDYEESAWQTGNIVKLQLLVNKAPVDAVARIVHSSQVERLGRQWVTKFKEHVDRQLFEVVIQAAVGKKIIARETVKPYRKDVLAKLHASDVSRRRKLLEKQKEGRKRLRAVGNVVIEHKAFQAFLAK.

Residues 1–43 (MRGCLQLARWLSAAPKGTAASLTRAPFVLANAPRYFTSSASRA) constitute a mitochondrion transit peptide. Positions 66–250 (ERYRNFCIVA…KIPAYGHFPV (185 aa)) constitute a tr-type G domain. GTP contacts are provided by residues 75–82 (AHVDHGKS), 139–143 (DTPGH), and 193–196 (NKVD).

The protein belongs to the TRAFAC class translation factor GTPase superfamily. Classic translation factor GTPase family. LepA subfamily.

Its subcellular location is the mitochondrion inner membrane. The catalysed reaction is GTP + H2O = GDP + phosphate + H(+). Functionally, promotes mitochondrial protein synthesis. May act as a fidelity factor of the translation reaction, by catalyzing a one-codon backward translocation of tRNAs on improperly translocated ribosomes. Binds to mitochondrial ribosomes in a GTP-dependent manner. This chain is Translation factor guf1, mitochondrial (guf1), found in Aspergillus fumigatus (strain ATCC MYA-4609 / CBS 101355 / FGSC A1100 / Af293) (Neosartorya fumigata).